The sequence spans 893 residues: Translation initiation factor IF-2 (893 aa).

Residues 49-303 are disordered; that stretch reads LNREAGSGPD…KGSSLQQGFQ (255 aa). Over residues 68-82 the composition is skewed to polar residues; that stretch reads STLNIPGTGGKSKSV. 2 stretches are compositionally biased toward basic and acidic residues: residues 93 to 159 and 166 to 216; these read VKRD…KDKV and DMTK…EENK. The span at 254–269 shows a compositional bias: basic residues; sequence GRGRNAKAARPAKKGN. The segment covering 270–283 has biased composition (basic and acidic residues); the sequence is KHAESKADREEARA. In terms of domain architecture, tr-type G spans 392–561; that stretch reads PRAPVVTIMG…LLQAEVLELK (170 aa). Residues 401-408 are G1; it reads GHVDHGKT. 401-408 serves as a coordination point for GTP; it reads GHVDHGKT. The tract at residues 426-430 is G2; the sequence is GITQH. Residues 447-450 are G3; the sequence is DTPG. Residues 447–451 and 501–504 each bind GTP; these read DTPGH and NKID. The segment at 501–504 is G4; that stretch reads NKID. The interval 537–539 is G5; the sequence is SAK.

Belongs to the TRAFAC class translation factor GTPase superfamily. Classic translation factor GTPase family. IF-2 subfamily.

It is found in the cytoplasm. One of the essential components for the initiation of protein synthesis. Protects formylmethionyl-tRNA from spontaneous hydrolysis and promotes its binding to the 30S ribosomal subunits. Also involved in the hydrolysis of GTP during the formation of the 70S ribosomal complex. This chain is Translation initiation factor IF-2, found in Salmonella arizonae (strain ATCC BAA-731 / CDC346-86 / RSK2980).